The chain runs to 1069 residues: Protocadherin-7 (1069 aa).

A signal peptide spans 1–28; that stretch reads MLRMRTAGWARGWCLGCCLLLPLSLSLA. Cadherin domains lie at 29 to 143, 144 to 308, 309 to 415, 424 to 535, 536 to 639, 640 to 742, and 745 to 862; these read AAKQ…TPTF, PSPV…SPRF, EKSV…VPSI, PLKD…PPMF, GQSV…DPKF, MQDV…APTV, and PKNI…IPLT. Topologically, residues 29–879 are extracellular; the sequence is AAKQLLRYRL…SYEISKQRLS (851 aa). N-linked (GlcNAc...) asparagine glycosylation is present at asparagine 79. Residues 182–242 are disordered; it reads LLQEPGGGGS…GGTNPGGRSS (61 aa). The span at 207–221 shows a compositional bias: gly residues; sequence PGGGGNGASGGGSGG. N-linked (GlcNAc...) asparagine glycans are attached at residues asparagine 689, asparagine 747, asparagine 780, asparagine 822, asparagine 840, and asparagine 845. The helical transmembrane segment at 880–900 threads the bilayer; it reads IVIGVVAGIMTVILIILIVVM. At 901 to 1069 the chain is on the cytoplasmic side; the sequence is ARYCRSKNKN…RLHPYITVFG (169 aa). Residues 910-988 are disordered; it reads NGYEAGKKDH…RYRSVNGGPG (79 aa). The span at 930-944 shows a compositional bias: basic residues; that stretch reads KSKKPKKDKKNKKSK. Residues serine 989 and serine 1011 each carry the phosphoserine modification.

As to expression, expressed predominantly in brain and heart and at lower levels in various other tissues.

It localises to the cell membrane. In Homo sapiens (Human), this protein is Protocadherin-7 (PCDH7).